The sequence spans 440 residues: C4-dicarboxylate transport protein (440 aa).

Transmembrane regions (helical) follow at residues 15 to 35 (VLVA…TGVA), 46 to 66 (LIKM…IAGM), 78 to 98 (YALL…LVVV), 146 to 166 (AFAN…GFAL), 190 to 210 (IINM…AFTI), 224 to 244 (LMAC…GGIC), 291 to 311 (VVGL…SIYL), 332 to 352 (ITLL…TGSG), and 354 to 374 (IVLA…LALI). A disordered region spans residues 420–440 (GAPLVDTRPTDDLGVAEGPAR).

Belongs to the dicarboxylate/amino acid:cation symporter (DAACS) (TC 2.A.23) family.

It localises to the cell inner membrane. Its function is as follows. Responsible for the transport of dicarboxylates such as succinate, fumarate, and malate from the periplasm across the membrane. This is C4-dicarboxylate transport protein from Pseudomonas putida (strain ATCC 700007 / DSM 6899 / JCM 31910 / BCRC 17059 / LMG 24140 / F1).